Here is a 248-residue protein sequence, read N- to C-terminus: NADP-dependent 3-hydroxy acid dehydrogenase YdfG (248 aa).

NADP(+) is bound by residues 7-12, 32-33, 54-55, and N81; these read GATAGF, RR, and DV. Position 134 (S134) interacts with substrate. NADP(+) is bound by residues Y147, K151, and 177–185; that span reads PGLVGGTEF. Y147 (proton acceptor) is an active-site residue.

This sequence belongs to the short-chain dehydrogenases/reductases (SDR) family. Homotetramer.

It carries out the reaction 3-hydroxypropanoate + NADP(+) = 3-oxopropanoate + NADPH + H(+). The catalysed reaction is L-allo-threonine + NADP(+) = aminoacetone + CO2 + NADPH. Functionally, NADP-dependent dehydrogenase with broad substrate specificity acting on 3-hydroxy acids. Catalyzes the NADP-dependent oxidation of L-allo-threonine to L-2-amino-3-keto-butyrate, which is spontaneously decarboxylated into aminoacetone. Also acts on D-threonine, L-serine, D-serine, D-3-hydroxyisobutyrate, L-3-hydroxyisobutyrate, D-glycerate and L-glycerate. Able to catalyze the reduction of the malonic semialdehyde to 3-hydroxypropionic acid. YdfG is apparently supplementing RutE, the presumed malonic semialdehyde reductase involved in pyrimidine degradation since both are able to detoxify malonic semialdehyde. The polypeptide is NADP-dependent 3-hydroxy acid dehydrogenase YdfG (Escherichia coli O6:H1 (strain CFT073 / ATCC 700928 / UPEC)).